The following is a 348-amino-acid chain: Dihydroorotase (348 aa).

Zn(2+) contacts are provided by His17 and His19. Residues 19-21 and Asn45 each bind substrate; that span reads HLR. The Zn(2+) site is built by Lys103, His140, and His178. The residue at position 103 (Lys103) is an N6-carboxylysine. A substrate-binding site is contributed by His140. Substrate is bound at residue Leu223. Residue Asp251 coordinates Zn(2+). The active site involves Asp251. The substrate site is built by His255 and Ala267.

The protein belongs to the metallo-dependent hydrolases superfamily. DHOase family. Class II DHOase subfamily. In terms of assembly, homodimer. It depends on Zn(2+) as a cofactor.

The enzyme catalyses (S)-dihydroorotate + H2O = N-carbamoyl-L-aspartate + H(+). It functions in the pathway pyrimidine metabolism; UMP biosynthesis via de novo pathway; (S)-dihydroorotate from bicarbonate: step 3/3. In terms of biological role, catalyzes the reversible cyclization of carbamoyl aspartate to dihydroorotate. The sequence is that of Dihydroorotase from Shigella sonnei (strain Ss046).